We begin with the raw amino-acid sequence, 222 residues long: MILTIDNILTSEELTELTDILSQGNFVDGQTTAGWHAKLVKQNSQLDKTAPEVKSLEALVINALQRNLLFKLAIHPKHIHSLRFSRYEPKMHYGSHTDNALMGGQQFFRSDVSFTLFLSSPESYEGGELIIEKPEGDLSYKLNPGSIVLYPSTFLHRVETVKTGTRLVVVGWVHSLIRDTAQREILFDIDTVRRSIFAKDGKSVEFDLLAKTHANLLRQWAD.

The Fe2OG dioxygenase domain maps to 78–175 (HIHSLRFSRY…RLVVVGWVHS (98 aa)). Fe cation is bound by residues histidine 96, aspartate 98, and histidine 156. Arginine 166 is a binding site for 2-oxoglutarate.

Requires Fe(2+) as cofactor. It depends on L-ascorbate as a cofactor.

The sequence is that of PKHD-type hydroxylase cce_3668 from Crocosphaera subtropica (strain ATCC 51142 / BH68) (Cyanothece sp. (strain ATCC 51142)).